Consider the following 281-residue polypeptide: Digeranylgeranylglyceryl phosphate synthase (281 aa).

Helical transmembrane passes span 88–108, 132–152, 200–220, 225–245, and 261–281; these read IALS…EFLI, ALVS…AGNL, GILV…PVIF, IIYL…ASAI, and LIKV…FRVV.

Belongs to the UbiA prenyltransferase family. DGGGP synthase subfamily. Mg(2+) serves as cofactor.

Its subcellular location is the cell membrane. The enzyme catalyses sn-3-O-(geranylgeranyl)glycerol 1-phosphate + (2E,6E,10E)-geranylgeranyl diphosphate = 2,3-bis-O-(geranylgeranyl)-sn-glycerol 1-phosphate + diphosphate. It participates in membrane lipid metabolism; glycerophospholipid metabolism. Prenyltransferase that catalyzes the transfer of the geranylgeranyl moiety of geranylgeranyl diphosphate (GGPP) to the C2 hydroxyl of (S)-3-O-geranylgeranylglyceryl phosphate (GGGP). This reaction is the second ether-bond-formation step in the biosynthesis of archaeal membrane lipids. This chain is Digeranylgeranylglyceryl phosphate synthase, found in Korarchaeum cryptofilum (strain OPF8).